Consider the following 111-residue polypeptide: UPF0235 protein glr3835 (111 aa).

The protein belongs to the UPF0235 family.

The protein is UPF0235 protein glr3835 of Gloeobacter violaceus (strain ATCC 29082 / PCC 7421).